Reading from the N-terminus, the 510-residue chain is ATP synthase subunit alpha (510 aa).

169–176 (GDRQTGKT) provides a ligand contact to ATP.

Belongs to the ATPase alpha/beta chains family. In terms of assembly, F-type ATPases have 2 components, CF(1) - the catalytic core - and CF(0) - the membrane proton channel. CF(1) has five subunits: alpha(3), beta(3), gamma(1), delta(1), epsilon(1). CF(0) has three main subunits: a(1), b(2) and c(9-12). The alpha and beta chains form an alternating ring which encloses part of the gamma chain. CF(1) is attached to CF(0) by a central stalk formed by the gamma and epsilon chains, while a peripheral stalk is formed by the delta and b chains.

It is found in the cell inner membrane. It carries out the reaction ATP + H2O + 4 H(+)(in) = ADP + phosphate + 5 H(+)(out). Functionally, produces ATP from ADP in the presence of a proton gradient across the membrane. The alpha chain is a regulatory subunit. This is ATP synthase subunit alpha from Methylobacterium radiotolerans (strain ATCC 27329 / DSM 1819 / JCM 2831 / NBRC 15690 / NCIMB 10815 / 0-1).